The primary structure comprises 245 residues: tRNA pseudouridine synthase A (245 aa).

Asp-52 (nucleophile) is an active-site residue. Tyr-111 contributes to the substrate binding site.

Belongs to the tRNA pseudouridine synthase TruA family. Homodimer.

The catalysed reaction is uridine(38/39/40) in tRNA = pseudouridine(38/39/40) in tRNA. Its function is as follows. Formation of pseudouridine at positions 38, 39 and 40 in the anticodon stem and loop of transfer RNAs. The sequence is that of tRNA pseudouridine synthase A from Thermotoga petrophila (strain ATCC BAA-488 / DSM 13995 / JCM 10881 / RKU-1).